Here is a 248-residue protein sequence, read N- to C-terminus: Probable transcriptional regulatory protein Avi_3631 (248 aa).

The protein belongs to the TACO1 family.

It is found in the cytoplasm. This chain is Probable transcriptional regulatory protein Avi_3631, found in Allorhizobium ampelinum (strain ATCC BAA-846 / DSM 112012 / S4) (Agrobacterium vitis (strain S4)).